Here is a 61-residue protein sequence, read N- to C-terminus: Large ribosomal subunit protein eL37 (61 aa).

The Zn(2+) site is built by Cys-20, Cys-23, Cys-35, and Cys-38. Residues 20 to 38 form a C4-type zinc finger; that stretch reads CPRCGRHSYNIVKGYCAAC.

This sequence belongs to the eukaryotic ribosomal protein eL37 family. Zn(2+) serves as cofactor.

Binds to the 23S rRNA. The chain is Large ribosomal subunit protein eL37 from Caldivirga maquilingensis (strain ATCC 700844 / DSM 13496 / JCM 10307 / IC-167).